The chain runs to 407 residues: MDSPCQPQPLSQALPQLPGSSSEPLEPEPGRARMGVESYLPCPLLPSYHCPGVPSEASAGSGTPRATATSTTASPLRDGFGGQDGGELRPLQSEGAAALVTKGCQRLAAQGARPEAPKRKWAEDGGDAPSPSKRPWARQENQEAEREGGMSCSCSSGSGEASAGLMEEALPSAPERLALDYIVPCMRYYGICVKDSFLGAALGGRVLAEVEALKRGGRLRDGQLVSQRAIPPRSIRGDQIAWVEGHEPGCRSIGALMAHVDAVIRHCAGRLGSYVINGRTKAMVACYPGNGLGYVRHVDNPHGDGRCITCIYYLNQNWDVKVHGGLLQIFPEGRPVVANIEPLFDRLLIFWSDRRNPHEVKPAYATRYAITVWYFDAKERAAAKDKYQLASGQKGVQVPVSQPPTPT.

Low complexity-rich tracts occupy residues 1-24 (MDSP…SSEP) and 57-75 (ASAG…TASP). 3 disordered regions span residues 1–34 (MDSP…RARM), 50–89 (CPGV…GELR), and 108–157 (AAQG…CSSG). The short motif at 89–134 (RPLQSEGAAALVTKGCQRLAAQGARPEAPKRKWAEDGGDAPSPSKR) is the Bipartite nuclear localization signal element. Ser130 carries the phosphoserine modification. Positions 225-235 (VSQRAIPPRSI) are beta(2)beta(3) 'finger-like' loop. In terms of domain architecture, Fe2OG dioxygenase spans 278–376 (GRTKAMVACY…RYAITVWYFD (99 aa)). 3 residues coordinate Fe cation: His297, Asp299, and His358. Position 367 (Arg367) interacts with 2-oxoglutarate.

In terms of assembly, interacts (preferably isoform p40) with SIAH2; the interaction targets both SIAH2 isoforms for proteasomal degradation in vitro. Interacts with LIMD1, WTIP and AJUBA. Fe(2+) is required as a cofactor. The cofactor is L-ascorbate. Post-translationally, ubiquitinated by SIAH1 and/or SIAH2 in response to the unfolded protein response (UPR), leading to its degradation. Expressed in adult and fetal heart, brain, liver, lung, skeletal muscle, and kidney. Also expressed in testis and placenta. Highest levels in adult brain, placenta, lung, kidney, and testis. Expressed in hormone responsive tissues, including normal and cancerous mammary, ovarian and prostate epithelium.

The protein resides in the nucleus. The enzyme catalyses L-prolyl-[protein] + 2-oxoglutarate + O2 = trans-4-hydroxy-L-prolyl-[protein] + succinate + CO2. The catalysed reaction is L-prolyl-[hypoxia-inducible factor alpha subunit] + 2-oxoglutarate + O2 = trans-4-hydroxy-L-prolyl-[hypoxia-inducible factor alpha subunit] + succinate + CO2. In terms of biological role, prolyl hydroxylase that mediates hydroxylation of proline residues in target proteins, such as ATF4, IKBKB, CEP192 and HIF1A. Target proteins are preferentially recognized via a LXXLAP motif. Cellular oxygen sensor that catalyzes, under normoxic conditions, the post-translational formation of 4-hydroxyproline in hypoxia-inducible factor (HIF) alpha proteins. Hydroxylates a specific proline found in each of the oxygen-dependent degradation (ODD) domains (N-terminal, NODD, and C-terminal, CODD) of HIF1A. Also hydroxylates HIF2A. Has a preference for the CODD site for both HIF1A and HIF2A. Hydroxylated HIFs are then targeted for proteasomal degradation via the von Hippel-Lindau ubiquitination complex. Under hypoxic conditions, the hydroxylation reaction is attenuated allowing HIFs to escape degradation resulting in their translocation to the nucleus, heterodimerization with HIF1B, and increased expression of hypoxy-inducible genes. EGLN2 is involved in regulating hypoxia tolerance and apoptosis in cardiac and skeletal muscle. Also regulates susceptibility to normoxic oxidative neuronal death. Links oxygen sensing to cell cycle and primary cilia formation by hydroxylating the critical centrosome component CEP192 which promotes its ubiquitination and subsequent proteasomal degradation. Hydroxylates IKBKB, mediating NF-kappa-B activation in hypoxic conditions. Also mediates hydroxylation of ATF4, leading to decreased protein stability of ATF4. This chain is Prolyl hydroxylase EGLN2, found in Homo sapiens (Human).